The sequence spans 550 residues: CCR4-NOT transcription complex subunit 6-like-B (550 aa).

Residues 1-148 (MPKEKYDPPD…LYQEPDGMRK (148 aa)) are required for interaction with cnot1, cnot3 and cnot7. LRR repeat units follow at residues 52 to 73 (HLTVLHLSDNNLSRIPPDIAKL), 75 to 96 (NLVYLDLSSNKLRSLPAELGNV), 98 to 120 (SLRELLLNNNLLRVLPFELGRLF), and 121 to 143 (RLQTLGLKGNPLSQDILGLYQEP). The nuclease domain stretch occupies residues 153-550 (MLDNLSVHPE…INGVHLPSRR (398 aa)). Glu235 is a binding site for Mg(2+). Substrate-binding residues include Glu235, Glu271, His355, and Pro360. Asp405 serves as a coordination point for Mg(2+). The active-site Proton donor/acceptor is Asp405. 3 residues coordinate substrate: Asn407, Asn474, and Phe479.

Belongs to the CCR4/nocturin family. In terms of assembly, component of the CCR4-NOT complex. The cofactor is Mg(2+).

It is found in the cytoplasm. Its subcellular location is the nucleus. It catalyses the reaction Exonucleolytic cleavage of poly(A) to 5'-AMP.. Poly(A) nuclease with 3'-5' RNase activity. Catalytic component of the CCR4-NOT complex which is one of the major cellular mRNA deadenylases and is linked to various cellular processes including bulk mRNA degradation, miRNA-mediated repression, translational repression during translational initiation and general transcription regulation. Additional complex functions may be a consequence of its influence on mRNA expression. The sequence is that of CCR4-NOT transcription complex subunit 6-like-B (cnot6l-b) from Xenopus laevis (African clawed frog).